The following is a 109-amino-acid chain: Large ribosomal subunit protein uL22 (109 aa).

It belongs to the universal ribosomal protein uL22 family. In terms of assembly, part of the 50S ribosomal subunit.

This protein binds specifically to 23S rRNA; its binding is stimulated by other ribosomal proteins, e.g. L4, L17, and L20. It is important during the early stages of 50S assembly. It makes multiple contacts with different domains of the 23S rRNA in the assembled 50S subunit and ribosome. Functionally, the globular domain of the protein is located near the polypeptide exit tunnel on the outside of the subunit, while an extended beta-hairpin is found that lines the wall of the exit tunnel in the center of the 70S ribosome. The sequence is that of Large ribosomal subunit protein uL22 from Methylobacillus flagellatus (strain ATCC 51484 / DSM 6875 / VKM B-1610 / KT).